The chain runs to 76 residues: UPF0291 protein BA_1897/GBAA_1897/BAS1759 (76 aa).

The protein belongs to the UPF0291 family.

Its subcellular location is the cytoplasm. The sequence is that of UPF0291 protein BA_1897/GBAA_1897/BAS1759 from Bacillus anthracis.